A 387-amino-acid chain; its full sequence is Ferrochelatase (387 aa).

Fe cation is bound by residues His196 and Glu277.

This sequence belongs to the ferrochelatase family.

The protein localises to the cytoplasm. The enzyme catalyses heme b + 2 H(+) = protoporphyrin IX + Fe(2+). It participates in porphyrin-containing compound metabolism; protoheme biosynthesis; protoheme from protoporphyrin-IX: step 1/1. Functionally, catalyzes the ferrous insertion into protoporphyrin IX. The chain is Ferrochelatase from Synechococcus sp. (strain RCC307).